Reading from the N-terminus, the 725-residue chain is Phosphoribosylformylglycinamidine synthase subunit PurL (725 aa).

H41 is an active-site residue. Y44 and K83 together coordinate ATP. E85 is a Mg(2+) binding site. Residues 86–89 (SHNH) and R108 each bind substrate. H87 functions as the Proton acceptor in the catalytic mechanism. D109 contacts Mg(2+). Q231 is a substrate binding site. Position 259 (D259) interacts with Mg(2+). 303-305 (ESQ) contributes to the substrate binding site. Residues D485 and G522 each coordinate ATP. N523 contacts Mg(2+). S525 lines the substrate pocket.

This sequence belongs to the FGAMS family. As to quaternary structure, monomer. Part of the FGAM synthase complex composed of 1 PurL, 1 PurQ and 2 PurS subunits.

The protein resides in the cytoplasm. It carries out the reaction N(2)-formyl-N(1)-(5-phospho-beta-D-ribosyl)glycinamide + L-glutamine + ATP + H2O = 2-formamido-N(1)-(5-O-phospho-beta-D-ribosyl)acetamidine + L-glutamate + ADP + phosphate + H(+). It participates in purine metabolism; IMP biosynthesis via de novo pathway; 5-amino-1-(5-phospho-D-ribosyl)imidazole from N(2)-formyl-N(1)-(5-phospho-D-ribosyl)glycinamide: step 1/2. Part of the phosphoribosylformylglycinamidine synthase complex involved in the purines biosynthetic pathway. Catalyzes the ATP-dependent conversion of formylglycinamide ribonucleotide (FGAR) and glutamine to yield formylglycinamidine ribonucleotide (FGAM) and glutamate. The FGAM synthase complex is composed of three subunits. PurQ produces an ammonia molecule by converting glutamine to glutamate. PurL transfers the ammonia molecule to FGAR to form FGAM in an ATP-dependent manner. PurS interacts with PurQ and PurL and is thought to assist in the transfer of the ammonia molecule from PurQ to PurL. The polypeptide is Phosphoribosylformylglycinamidine synthase subunit PurL (Thermus thermophilus (strain ATCC BAA-163 / DSM 7039 / HB27)).